The chain runs to 21 residues: Hemocyanin subunit 4 (21 aa).

The protein belongs to the tyrosinase family. Hemocyanin subfamily. In terms of tissue distribution, hemolymph.

The protein localises to the secreted. It localises to the extracellular space. Hemocyanins are copper-containing oxygen carriers occurring freely dissolved in the hemolymph of many mollusks and arthropods. This chain is Hemocyanin subunit 4, found in Maja squinado (Mediterranean spider crab).